We begin with the raw amino-acid sequence, 269 residues long: Phosphatidylglycerophosphate phosphatase 1, chloroplastic (269 aa).

The transit peptide at 1–33 (MRSVPGPSPPCTRSLAHSCRAAARGPCGSARPR) directs the protein to the chloroplast. The disordered stretch occupies residues 25 to 46 (GPCGSARPRARSVSARAHSSEA). Low complexity predominate over residues 29 to 46 (SARPRARSVSARAHSSEA). The Phosphoryl acceptor signature appears at 103–107 (DKDNT).

The protein belongs to the HAD-like hydrolase superfamily.

The protein resides in the plastid. It is found in the chloroplast. It catalyses the reaction a 1,2-diacyl-sn-glycero-3-phospho-(1'-sn-glycero-3'-phosphate) + H2O = a 1,2-diacyl-sn-glycero-3-phospho-(1'-sn-glycerol) + phosphate. Its pathway is phospholipid metabolism; phosphatidylglycerol biosynthesis; phosphatidylglycerol from CDP-diacylglycerol: step 2/2. Functionally, phosphatidylglycerophosphate phosphatase involved in the biosynthesis of phosphatidylglycerol (PG), a phosphoglycerolipid predominantly present in chloroplastic thylakoid membranes and which has important photosynthetic function. Required for thylakoid membranes development and chloroplast function. This is Phosphatidylglycerophosphate phosphatase 1, chloroplastic from Chlamydomonas reinhardtii (Chlamydomonas smithii).